The sequence spans 862 residues: Linoleate 9S-lipoxygenase 1 (862 aa).

The 128-residue stretch at 44–171 folds into the PLAT domain; it reads FGAATDIVGG…SYKRDRIFFA (128 aa). Residues 174–862 enclose the Lipoxygenase domain; sequence TYLPNETPAS…FRGIPNSISI (689 aa). The disordered stretch occupies residues 225–257; sequence KNLARTTLGGSSDFPYPRRGRTGRKSTRKDPKC. Positions 242-251 are enriched in basic residues; that stretch reads RRGRTGRKST. Positions 522, 527, 713, 717, and 862 each coordinate Fe cation.

Belongs to the lipoxygenase family. Monomer. The cofactor is Fe cation.

The protein localises to the cytoplasm. It catalyses the reaction (9Z,12Z)-octadecadienoate + O2 = (13S)-hydroperoxy-(9Z,11E)-octadecadienoate. It carries out the reaction (9Z,12Z,15Z)-octadecatrienoate + O2 = (13S)-hydroperoxy-(9Z,11E,15Z)-octadecatrienoate. The catalysed reaction is (9Z,12Z)-octadecadienoate + O2 = (9S)-hydroperoxy-(10E,12Z)-octadecadienoate. It functions in the pathway lipid metabolism; oxylipin biosynthesis. Its function is as follows. Plant lipoxygenase may be involved in a number of diverse aspects of plant physiology including growth and development, pest resistance, and senescence or responses to wounding. It catalyzes the hydroperoxidation of lipids containing a cis,cis-1,4-pentadiene structure. In Phaseolus vulgaris (Kidney bean), this protein is Linoleate 9S-lipoxygenase 1 (LOXA).